Reading from the N-terminus, the 182-residue chain is Oligoribonuclease (182 aa).

Positions 8 to 171 (LIWLDMEMTG…ADIHESIGEL (164 aa)) constitute an Exonuclease domain. Tyr129 is a catalytic residue.

This sequence belongs to the oligoribonuclease family.

It is found in the cytoplasm. Its function is as follows. 3'-to-5' exoribonuclease specific for small oligoribonucleotides. This is Oligoribonuclease from Azoarcus sp. (strain BH72).